A 359-amino-acid polypeptide reads, in one-letter code: Alanine racemase (359 aa).

The Proton acceptor; specific for D-alanine role is filled by K34. An N6-(pyridoxal phosphate)lysine modification is found at K34. Substrate is bound at residue R129. The Proton acceptor; specific for L-alanine role is filled by Y256. M304 provides a ligand contact to substrate.

This sequence belongs to the alanine racemase family. The cofactor is pyridoxal 5'-phosphate.

It catalyses the reaction L-alanine = D-alanine. It participates in amino-acid biosynthesis; D-alanine biosynthesis; D-alanine from L-alanine: step 1/1. Functionally, catalyzes the interconversion of L-alanine and D-alanine. May also act on other amino acids. The chain is Alanine racemase (alr) from Photobacterium profundum (strain SS9).